Consider the following 417-residue polypeptide: Gamma-glutamyl phosphate reductase (417 aa).

The protein belongs to the gamma-glutamyl phosphate reductase family.

The protein localises to the cytoplasm. The catalysed reaction is L-glutamate 5-semialdehyde + phosphate + NADP(+) = L-glutamyl 5-phosphate + NADPH + H(+). It functions in the pathway amino-acid biosynthesis; L-proline biosynthesis; L-glutamate 5-semialdehyde from L-glutamate: step 2/2. Catalyzes the NADPH-dependent reduction of L-glutamate 5-phosphate into L-glutamate 5-semialdehyde and phosphate. The product spontaneously undergoes cyclization to form 1-pyrroline-5-carboxylate. The sequence is that of Gamma-glutamyl phosphate reductase from Polynucleobacter asymbioticus (strain DSM 18221 / CIP 109841 / QLW-P1DMWA-1) (Polynucleobacter necessarius subsp. asymbioticus).